Reading from the N-terminus, the 1075-residue chain is DNA-directed RNA polymerase subunit beta (1075 aa).

Belongs to the RNA polymerase beta chain family. As to quaternary structure, in plastids the minimal PEP RNA polymerase catalytic core is composed of four subunits: alpha, beta, beta', and beta''. When a (nuclear-encoded) sigma factor is associated with the core the holoenzyme is formed, which can initiate transcription.

It is found in the plastid. It localises to the chloroplast. The enzyme catalyses RNA(n) + a ribonucleoside 5'-triphosphate = RNA(n+1) + diphosphate. In terms of biological role, DNA-dependent RNA polymerase catalyzes the transcription of DNA into RNA using the four ribonucleoside triphosphates as substrates. This is DNA-directed RNA polymerase subunit beta from Zea mays (Maize).